The primary structure comprises 186 residues: Ribosome-recycling factor (186 aa).

It belongs to the RRF family.

The protein resides in the cytoplasm. Functionally, responsible for the release of ribosomes from messenger RNA at the termination of protein biosynthesis. May increase the efficiency of translation by recycling ribosomes from one round of translation to another. The polypeptide is Ribosome-recycling factor (Leptothrix cholodnii (strain ATCC 51168 / LMG 8142 / SP-6) (Leptothrix discophora (strain SP-6))).